Reading from the N-terminus, the 376-residue chain is tRNA-specific 2-thiouridylase MnmA (376 aa).

ATP-binding positions include 14–21 (GMSGGVDS) and Met40. The interaction with target base in tRNA stretch occupies residues 100 to 102 (NPD). Cys105 functions as the Nucleophile in the catalytic mechanism. The cysteines at positions 105 and 202 are disulfide-linked. Gly129 is an ATP binding site. The interval 152–154 (KDQ) is interaction with tRNA. Cys202 functions as the Cysteine persulfide intermediate in the catalytic mechanism. The tract at residues 315 to 316 (RY) is interaction with tRNA.

The protein belongs to the MnmA/TRMU family.

It is found in the cytoplasm. It carries out the reaction S-sulfanyl-L-cysteinyl-[protein] + uridine(34) in tRNA + AH2 + ATP = 2-thiouridine(34) in tRNA + L-cysteinyl-[protein] + A + AMP + diphosphate + H(+). In terms of biological role, catalyzes the 2-thiolation of uridine at the wobble position (U34) of tRNA, leading to the formation of s(2)U34. In Lactococcus lactis subsp. lactis (strain IL1403) (Streptococcus lactis), this protein is tRNA-specific 2-thiouridylase MnmA.